We begin with the raw amino-acid sequence, 360 residues long: Methylthioribose-1-phosphate isomerase (360 aa).

Aspartate 246 (proton donor) is an active-site residue.

This sequence belongs to the eIF-2B alpha/beta/delta subunits family. MtnA subfamily.

It is found in the cytoplasm. The protein localises to the nucleus. It catalyses the reaction 5-(methylsulfanyl)-alpha-D-ribose 1-phosphate = 5-(methylsulfanyl)-D-ribulose 1-phosphate. It functions in the pathway amino-acid biosynthesis; L-methionine biosynthesis via salvage pathway; L-methionine from S-methyl-5-thio-alpha-D-ribose 1-phosphate: step 1/6. Functionally, catalyzes the interconversion of methylthioribose-1-phosphate (MTR-1-P) into methylthioribulose-1-phosphate (MTRu-1-P). The chain is Methylthioribose-1-phosphate isomerase from Aedes aegypti (Yellowfever mosquito).